Consider the following 473-residue polypeptide: Presenilin-B (473 aa).

Residues 1-141 (MSSDNNNDPF…PLLNKKEKDD (141 aa)) are disordered. The Cytoplasmic portion of the chain corresponds to 1 to 164 (MSSDNNNDPF…DDEVSLQDFS (164 aa)). The segment covering 22-46 (RVSTTTSPNRQSINSSPKQSSPKST) has biased composition (polar residues). Over residues 54–72 (NIILDLNDNNNDNNNTNNY) the composition is skewed to low complexity. A compositionally biased stretch (basic and acidic residues) spans 79–89 (VDNKNKFENKD). Residues 165 to 185 (SMIVSIIIPVSITMMAVVFFV) traverse the membrane as a helical segment. Over 186–224 (KYLNNQTLYASTLSYTIAGGSSGGGSGADSITGNSFVDS) the chain is Lumenal. N-linked (GlcNAc...) asparagine glycosylation occurs at Asn190. A helical transmembrane segment spans residues 225 to 245 (LIVAGIVLGMIIVTTVAFVLL). The Cytoplasmic segment spans residues 246 to 252 (YKYRCLK). A helical membrane pass occupies residues 253–273 (ILYGWLFLSVGMMLGSFGTTF). Topologically, residues 274–286 (FQAMLSAANLPLD) are lumenal. Residues 287 to 307 (YITFAFLIFNFTVCGIIGVFW) form a helical membrane-spanning segment. Position 308 (Tyr308) is a topological domain, cytoplasmic. A helical transmembrane segment spans residues 309–329 (AHQYVNQLYLVIISVLMAISL). Residues 330 to 334 (TRLPQ) lie on the Lumenal side of the membrane. Residues 335–355 (WTIFTLLVIVAIYDLFAVLCP) form a helical membrane-spanning segment. Residue Asp348 is part of the active site. Over 356–389 (RGPLKVLVELSQERNENIPALVYETGKGSDSNLK) the chain is Cytoplasmic. A helical membrane pass occupies residues 390 to 410 (LGLGDFIFYSLLISRAALVHM). Asp394 is a catalytic residue. Residues 411-413 (SCV) lie on the Lumenal side of the membrane. A helical membrane pass occupies residues 414–434 (FSTFIAILTGLFLTLLCLAIF). Over 435–442 (KKALPALP) the chain is Cytoplasmic. Positions 439–441 (PAL) match the PAL motif. Positions 443-463 (ISIFLGILFYYLSNNFLTPFI) form an intramembrane region, helical. At 464-473 (EALTLSQIFV) the chain is on the cytoplasmic side.

The protein belongs to the peptidase A22A family. Homodimer. Component of the gamma-secretase complex, a complex composed of a presenilin homodimer, nicastrin, aph1 and pen2.

It is found in the endoplasmic reticulum membrane. It localises to the golgi apparatus membrane. Its function is as follows. Probable catalytic subunit of the gamma-secretase complex, an endoprotease complex that catalyzes the intramembrane cleavage of integral membrane proteins such as Notch receptors. Requires the other members of the gamma-secretase complex to have a protease activity. This is Presenilin-B (psenB) from Dictyostelium discoideum (Social amoeba).